Here is a 24-residue protein sequence, read N- to C-terminus: Humanin-like 1 (24 aa).

The protein belongs to the humanin family. In terms of tissue distribution, highly expressed in the kidney, heart muscle and testis.

Its subcellular location is the secreted. The protein resides in the cytoplasm. In terms of biological role, plays a role as a neuroprotective and antiapoptotic factor. The protein is Humanin-like 1 of Homo sapiens (Human).